The following is a 473-amino-acid chain: Putative F-box/LRR-repeat protein At3g59170 (473 aa).

One can recognise an F-box domain in the interval 6–54; the sequence is KDMINVLPDALLCHILSFLTTKEAASTSLLSRRWRYLLAFVPNLEFDDS. LRR repeat units lie at residues 168–194, 196–221, 229–254, 333–364, and 365–390; these read TIKI…YLQS, MFDE…VLDG, SFTV…GYMH, VLYL…TIKS, and DPNV…VFQG.

This is Putative F-box/LRR-repeat protein At3g59170 from Arabidopsis thaliana (Mouse-ear cress).